The primary structure comprises 391 residues: Chorismate synthase (391 aa).

R48 is a binding site for NADP(+). FMN-binding positions include 126 to 128, G286, 301 to 305, and R328; these read RAS and KPTSS.

Belongs to the chorismate synthase family. It depends on FMNH2 as a cofactor.

It carries out the reaction 5-O-(1-carboxyvinyl)-3-phosphoshikimate = chorismate + phosphate. It functions in the pathway metabolic intermediate biosynthesis; chorismate biosynthesis; chorismate from D-erythrose 4-phosphate and phosphoenolpyruvate: step 7/7. Its function is as follows. Catalyzes the anti-1,4-elimination of the C-3 phosphate and the C-6 proR hydrogen from 5-enolpyruvylshikimate-3-phosphate (EPSP) to yield chorismate, which is the branch point compound that serves as the starting substrate for the three terminal pathways of aromatic amino acid biosynthesis. This reaction introduces a second double bond into the aromatic ring system. The chain is Chorismate synthase from Saccharolobus islandicus (strain M.16.27) (Sulfolobus islandicus).